Consider the following 648-residue polypeptide: NADP-dependent malic enzyme, chloroplastic (648 aa).

Residues 1-61 (MISLNSSFLE…VDSAVRDVNA (61 aa)) constitute a chloroplast transit peptide. Residue Tyr195 is the Proton donor of the active site. Arg248 contacts NAD(+). The active-site Proton acceptor is Lys266. The a divalent metal cation site is built by Glu339, Asp340, and Asp363. Asp363 contacts NAD(+). 392–408 (LFLGAGEAGTGIAELIA) serves as a coordination point for NADP(+). Position 504 (Asn504) interacts with NAD(+).

This sequence belongs to the malic enzymes family. As to quaternary structure, homotetramer. It depends on Mg(2+) as a cofactor. Requires Mn(2+) as cofactor.

The protein resides in the plastid. Its subcellular location is the chloroplast. The enzyme catalyses (S)-malate + NADP(+) = pyruvate + CO2 + NADPH. It catalyses the reaction oxaloacetate + H(+) = pyruvate + CO2. It functions in the pathway photosynthesis; C4 acid pathway. Functionally, the chloroplastic ME isoform decarboxylates malate shuttled from neighboring mesophyll cells. The CO(2) released is then refixed by ribulose-bisphosphate carboxylase. This pathway eliminates the photorespiratory loss of CO(2) that occurs in most plants. This Flaveria trinervia (Clustered yellowtops) protein is NADP-dependent malic enzyme, chloroplastic (MOD1).